The following is a 231-amino-acid chain: PIAGSMVLAAILLKLGGYGIIRMMQILPATKTDMFLPFIVLALWGAILANLTCLQQTDLKSLIAYSSISHMGLVVAAIIIQTPWGLSGAMALMIAHGFTSSALFCLANTTYERTHTRILILTRGFHNILPMTTTWWLFVNLMNIAIPPTMNFTSELLIMSTLFNWCPTTIIMLGLSMLITASYSLHMFLSTQMGPTPLNNQTEPTHSREHLLMALHVIPLMMISMKPELIT.

6 helical membrane-spanning segments follow: residues 1 to 21 (PIAG…YGII), 34 to 54 (MFLP…LTCL), 63 to 85 (IAYS…TPWG), 89 to 111 (AMAL…NTTY), 128 to 148 (ILPM…AIPP), and 169 to 189 (TIIM…HMFL).

Belongs to the complex I subunit 4 family.

The protein localises to the mitochondrion membrane. It carries out the reaction a ubiquinone + NADH + 5 H(+)(in) = a ubiquinol + NAD(+) + 4 H(+)(out). Core subunit of the mitochondrial membrane respiratory chain NADH dehydrogenase (Complex I) that is believed to belong to the minimal assembly required for catalysis. Complex I functions in the transfer of electrons from NADH to the respiratory chain. The immediate electron acceptor for the enzyme is believed to be ubiquinone. This is NADH-ubiquinone oxidoreductase chain 4 (MT-ND4) from Deinagkistrodon acutus (Hundred-pace snake).